Here is a 298-residue protein sequence, read N- to C-terminus: N-acetylmuramic acid 6-phosphate etherase (298 aa).

The SIS domain maps to 55 to 218 (IHAQVSGGGR…STGLMIKSGK (164 aa)). The active-site Proton donor is glutamate 83. The active site involves glutamate 114.

It belongs to the GCKR-like family. MurNAc-6-P etherase subfamily. As to quaternary structure, homodimer.

The catalysed reaction is N-acetyl-D-muramate 6-phosphate + H2O = N-acetyl-D-glucosamine 6-phosphate + (R)-lactate. Its pathway is amino-sugar metabolism; 1,6-anhydro-N-acetylmuramate degradation. It participates in amino-sugar metabolism; N-acetylmuramate degradation. It functions in the pathway cell wall biogenesis; peptidoglycan recycling. Its function is as follows. Specifically catalyzes the cleavage of the D-lactyl ether substituent of MurNAc 6-phosphate, producing GlcNAc 6-phosphate and D-lactate. Together with AnmK, is also required for the utilization of anhydro-N-acetylmuramic acid (anhMurNAc) either imported from the medium or derived from its own cell wall murein, and thus plays a role in cell wall recycling. The protein is N-acetylmuramic acid 6-phosphate etherase of Shigella boydii serotype 18 (strain CDC 3083-94 / BS512).